The sequence spans 283 residues: NFU1 iron-sulfur cluster scaffold homolog, mitochondrial (283 aa).

The transit peptide at 1 to 65 directs the protein to the mitochondrion; it reads MSKFLSQAAI…ELRMPVACRR (65 aa). Positions 182–250 are nifU; the sequence is IKELLDTRIR…IPEVESVEQV (69 aa). Residues C219 and C222 each contribute to the [4Fe-4S] cluster site.

Belongs to the NifU family.

It localises to the mitochondrion. Functionally, molecular scaffold for [Fe-S] cluster assembly of mitochondrial iron-sulfur proteins. The sequence is that of NFU1 iron-sulfur cluster scaffold homolog, mitochondrial from Drosophila simulans (Fruit fly).